We begin with the raw amino-acid sequence, 146 residues long: Large ribosomal subunit protein uL15 (146 aa).

Residues 1–57 (MDLSNLKAAEGSVHSDNFRRGRGHGSGNGKTAGKGHKGQKARSGAPRPGFEGGQMPL) are disordered.

This sequence belongs to the universal ribosomal protein uL15 family. In terms of assembly, part of the 50S ribosomal subunit.

Functionally, binds to the 23S rRNA. This Agathobacter rectalis (strain ATCC 33656 / DSM 3377 / JCM 17463 / KCTC 5835 / VPI 0990) (Eubacterium rectale) protein is Large ribosomal subunit protein uL15.